The sequence spans 100 residues: Urease subunit gamma (100 aa).

The protein belongs to the urease gamma subunit family. In terms of assembly, heterotrimer of UreA (gamma), UreB (beta) and UreC (alpha) subunits. Three heterotrimers associate to form the active enzyme.

It localises to the cytoplasm. It catalyses the reaction urea + 2 H2O + H(+) = hydrogencarbonate + 2 NH4(+). The protein operates within nitrogen metabolism; urea degradation; CO(2) and NH(3) from urea (urease route): step 1/1. The sequence is that of Urease subunit gamma from Saccharophagus degradans (strain 2-40 / ATCC 43961 / DSM 17024).